Consider the following 508-residue polypeptide: MGLPWYRVHTVVLNDPGRLLSVHIMHTALVAGWAGSMALYELAVFDPSDPVLDPMWRQGMFVIPFMTRLGITNSWGGWNITGGTITNPGLWSYEGVAGAHIVFSGLCFLAAIWHWVYWDLEIFCDERTGKPSLDLPKIFGIHLFLSGVACFGFGAFHVTGLYGPGIWVSDPYGLTGKVQPVNPAWGVEGFDPFVPGGIASHHIAAGTLGILAGLFHLSVRPPQRLYKGLRMGNIETVLSSSIAAVFFAAFVVAGTMWYGSATTPIELFGPTRYEWDQGYFQQEIYRRVSAGLAENQSLSEVWSKIPEKLAFYDYIGNNPAKGGLFRAGSMDNGDGIAVGWLGHPVFRNKEGRELFVRRMPTFFETFPVVLVDGDGIVRAYVPFRRAESKYSVEQVGVTVELYGGELNGVSYSDPATVKKYARRAQLGEIFELDRATLKSDGVFRSSPRGWFTFGHASFALLFFFGHIWHGARTLFRDVFAGIDPDLDAQVEFGAFQKLGDPTTKRQAA.

6 helical membrane passes run 21–36, 101–115, 140–156, 203–218, 237–252, and 457–472; these read SVHI…WAGS, IVFS…IWHW, GIHL…FGAF, IAAG…FHLS, VLSS…AFVV, and SFAL…HGAR.

Belongs to the PsbB/PsbC family. PsbB subfamily. PSII is composed of 1 copy each of membrane proteins PsbA, PsbB, PsbC, PsbD, PsbE, PsbF, PsbH, PsbI, PsbJ, PsbK, PsbL, PsbM, PsbT, PsbX, PsbY, PsbZ, Psb30/Ycf12, at least 3 peripheral proteins of the oxygen-evolving complex and a large number of cofactors. It forms dimeric complexes. Binds multiple chlorophylls. PSII binds additional chlorophylls, carotenoids and specific lipids. serves as cofactor.

It localises to the plastid. Its subcellular location is the chloroplast thylakoid membrane. One of the components of the core complex of photosystem II (PSII). It binds chlorophyll and helps catalyze the primary light-induced photochemical processes of PSII. PSII is a light-driven water:plastoquinone oxidoreductase, using light energy to abstract electrons from H(2)O, generating O(2) and a proton gradient subsequently used for ATP formation. This Aethionema grandiflorum (Persian stone-cress) protein is Photosystem II CP47 reaction center protein.